Here is a 331-residue protein sequence, read N- to C-terminus: L-lactate dehydrogenase A chain (331 aa).

NAD(+) contacts are provided by residues 29 to 57 (GMVGMASAISILLKDLCDELAMVDVMEDK) and R98. Substrate is bound by residues R105, N137, and R168. N137 is an NAD(+) binding site. Catalysis depends on H192, which acts as the Proton acceptor. Residue T247 participates in substrate binding.

This sequence belongs to the LDH/MDH superfamily. LDH family. In terms of assembly, homotetramer.

It is found in the cytoplasm. The enzyme catalyses (S)-lactate + NAD(+) = pyruvate + NADH + H(+). Its pathway is fermentation; pyruvate fermentation to lactate; (S)-lactate from pyruvate: step 1/1. In terms of biological role, interconverts simultaneously and stereospecifically pyruvate and lactate with concomitant interconversion of NADH and NAD(+). This chain is L-lactate dehydrogenase A chain (ldha), found in Dissostichus eleginoides (Patagonian toothfish).